Reading from the N-terminus, the 367-residue chain is Heme A synthase (367 aa).

5 helical membrane-spanning segments follow: residues 25–45, 111–131, 139–159, 174–194, and 210–230; these read ALRF…LVGG, LIAR…WLTG, WPLV…WWMV, LATH…IMRG, and GFAA…ALVA. Residue histidine 274 participates in heme binding. 3 helical membrane-spanning segments follow: residues 276-296, 305-325, and 327-347; these read IGAY…LRAA, AILL…TLLM, and VPLH…GFAV. Histidine 335 is a heme binding site.

This sequence belongs to the COX15/CtaA family. Type 2 subfamily. In terms of assembly, interacts with CtaB. Requires heme b as cofactor.

It localises to the cell membrane. The catalysed reaction is Fe(II)-heme o + 2 A + H2O = Fe(II)-heme a + 2 AH2. It participates in porphyrin-containing compound metabolism; heme A biosynthesis; heme A from heme O: step 1/1. In terms of biological role, catalyzes the conversion of heme O to heme A by two successive hydroxylations of the methyl group at C8. The first hydroxylation forms heme I, the second hydroxylation results in an unstable dihydroxymethyl group, which spontaneously dehydrates, resulting in the formyl group of heme A. This is Heme A synthase from Rhizobium johnstonii (strain DSM 114642 / LMG 32736 / 3841) (Rhizobium leguminosarum bv. viciae).